A 137-amino-acid chain; its full sequence is Large-conductance mechanosensitive channel (137 aa).

2 helical membrane-spanning segments follow: residues alanine 9–phenylalanine 29 and isoleucine 79–isoleucine 99.

The protein belongs to the MscL family. Homopentamer.

It is found in the cell inner membrane. In terms of biological role, channel that opens in response to stretch forces in the membrane lipid bilayer. May participate in the regulation of osmotic pressure changes within the cell. In Pseudomonas paraeruginosa (strain DSM 24068 / PA7) (Pseudomonas aeruginosa (strain PA7)), this protein is Large-conductance mechanosensitive channel.